A 44-amino-acid polypeptide reads, in one-letter code: Photosystem I reaction center subunit IX (44 aa).

The helical transmembrane segment at 7–27 (YLSVAPVLATLWFGSLAGLLI) threads the bilayer.

This sequence belongs to the PsaJ family.

The protein resides in the plastid. The protein localises to the chloroplast thylakoid membrane. Its function is as follows. May help in the organization of the PsaE and PsaF subunits. The chain is Photosystem I reaction center subunit IX from Piper cenocladum (Ant piper).